The following is a 788-amino-acid chain: Glucan 1,3-beta-glucosidase (788 aa).

A signal peptide spans 1-42 (MRFSSLLACLGAVGIQAAAIPFQRRVDNTTDSGSLDAAQAAA). Residues asparagine 28, asparagine 233, asparagine 381, and asparagine 773 are each glycosylated (N-linked (GlcNAc...) asparagine).

Belongs to the glycosyl hydrolase 55 family.

It carries out the reaction Successive hydrolysis of beta-D-glucose units from the non-reducing ends of (1-&gt;3)-beta-D-glucans, releasing alpha-glucose.. This Cochliobolus carbonum (Maize leaf spot fungus) protein is Glucan 1,3-beta-glucosidase (EXG1).